The following is a 209-amino-acid chain: Protein GET1 (209 aa).

Residues 1 to 3 (MSL) are Lumenal-facing. A helical transmembrane segment spans residues 4 to 23 (LLVIFLLELVVQLVNTIGAK). Residues 24–110 (TINNLLWRFY…SFSRKLTIYR (87 aa)) lie on the Cytoplasmic side of the membrane. A coiled-coil region spans residues 74–101 (WARLQRKHDKLMDELEKKKSQLDAHRTS). The helical transmembrane segment at 111–131 (WILTRGMQWFLCFWFSSQPMF) threads the bilayer. At 132–155 (WLPYGWFPYWVEWLVSFPNAPMGS) the chain is on the lumenal side. A helical membrane pass occupies residues 156 to 172 (VSIVVWQSACSGVLALV). The Cytoplasmic segment spans residues 173–209 (IEAVMAVVRYTGGTGMQKQRQPVPAAGGAPGTSKKDL). The segment at 188–209 (MQKQRQPVPAAGGAPGTSKKDL) is disordered.

The protein belongs to the WRB/GET1 family. Interacts with GET3.

The protein resides in the endoplasmic reticulum membrane. Required for the post-translational delivery of tail-anchored (TA) proteins to the endoplasmic reticulum. Acts as a membrane receptor for soluble GET3, which recognizes and selectively binds the transmembrane domain of TA proteins in the cytosol. The sequence is that of Protein GET1 from Chaetomium thermophilum (strain DSM 1495 / CBS 144.50 / IMI 039719) (Thermochaetoides thermophila).